Reading from the N-terminus, the 469-residue chain is 3-isopropylmalate dehydratase large subunit (469 aa).

[4Fe-4S] cluster-binding residues include Cys-348, Cys-409, and Cys-412.

This sequence belongs to the aconitase/IPM isomerase family. LeuC type 1 subfamily. In terms of assembly, heterodimer of LeuC and LeuD. [4Fe-4S] cluster is required as a cofactor.

The catalysed reaction is (2R,3S)-3-isopropylmalate = (2S)-2-isopropylmalate. Its pathway is amino-acid biosynthesis; L-leucine biosynthesis; L-leucine from 3-methyl-2-oxobutanoate: step 2/4. In terms of biological role, catalyzes the isomerization between 2-isopropylmalate and 3-isopropylmalate, via the formation of 2-isopropylmaleate. The polypeptide is 3-isopropylmalate dehydratase large subunit (Nitrosococcus oceani (strain ATCC 19707 / BCRC 17464 / JCM 30415 / NCIMB 11848 / C-107)).